The following is a 251-amino-acid chain: Triosephosphate isomerase (251 aa).

A substrate-binding site is contributed by 9–11 (NWK). Catalysis depends on histidine 95, which acts as the Electrophile. Glutamate 167 serves as the catalytic Proton acceptor. Residues glycine 173, serine 213, and 234 to 235 (GG) contribute to the substrate site.

It belongs to the triosephosphate isomerase family. As to quaternary structure, homodimer.

The protein resides in the cytoplasm. It carries out the reaction D-glyceraldehyde 3-phosphate = dihydroxyacetone phosphate. Its pathway is carbohydrate biosynthesis; gluconeogenesis. It functions in the pathway carbohydrate degradation; glycolysis; D-glyceraldehyde 3-phosphate from glycerone phosphate: step 1/1. Its function is as follows. Involved in the gluconeogenesis. Catalyzes stereospecifically the conversion of dihydroxyacetone phosphate (DHAP) to D-glyceraldehyde-3-phosphate (G3P). This chain is Triosephosphate isomerase, found in Enterococcus faecalis (strain ATCC 700802 / V583).